Consider the following 403-residue polypeptide: Phosphoglycerate kinase (403 aa).

Substrate contacts are provided by residues 21–23 (DFN), arginine 36, 59–62 (HLGR), arginine 119, and arginine 159. ATP is bound by residues lysine 214, glycine 301, glutamate 332, and 359 to 362 (GGDS).

It belongs to the phosphoglycerate kinase family. In terms of assembly, monomer.

It localises to the cytoplasm. The catalysed reaction is (2R)-3-phosphoglycerate + ATP = (2R)-3-phospho-glyceroyl phosphate + ADP. It functions in the pathway carbohydrate degradation; glycolysis; pyruvate from D-glyceraldehyde 3-phosphate: step 2/5. The polypeptide is Phosphoglycerate kinase (Lactobacillus acidophilus (strain ATCC 700396 / NCK56 / N2 / NCFM)).